The sequence spans 423 residues: Gamma-glutamyl phosphate reductase (423 aa).

It belongs to the gamma-glutamyl phosphate reductase family.

The protein localises to the cytoplasm. It catalyses the reaction L-glutamate 5-semialdehyde + phosphate + NADP(+) = L-glutamyl 5-phosphate + NADPH + H(+). The protein operates within amino-acid biosynthesis; L-proline biosynthesis; L-glutamate 5-semialdehyde from L-glutamate: step 2/2. Its function is as follows. Catalyzes the NADPH-dependent reduction of L-glutamate 5-phosphate into L-glutamate 5-semialdehyde and phosphate. The product spontaneously undergoes cyclization to form 1-pyrroline-5-carboxylate. This Burkholderia lata (strain ATCC 17760 / DSM 23089 / LMG 22485 / NCIMB 9086 / R18194 / 383) protein is Gamma-glutamyl phosphate reductase.